The following is a 565-amino-acid chain: Sulfite reductase [NADPH] hemoprotein beta-component (565 aa).

Positions 429, 435, 474, and 478 each coordinate [4Fe-4S] cluster. Siroheme is bound at residue C478.

The protein belongs to the nitrite and sulfite reductase 4Fe-4S domain family. Alpha(8)-beta(8). The alpha component is a flavoprotein, the beta component is a hemoprotein. The cofactor is siroheme. Requires [4Fe-4S] cluster as cofactor.

It catalyses the reaction hydrogen sulfide + 3 NADP(+) + 3 H2O = sulfite + 3 NADPH + 4 H(+). The protein operates within sulfur metabolism; hydrogen sulfide biosynthesis; hydrogen sulfide from sulfite (NADPH route): step 1/1. Functionally, component of the sulfite reductase complex that catalyzes the 6-electron reduction of sulfite to sulfide. This is one of several activities required for the biosynthesis of L-cysteine from sulfate. This is Sulfite reductase [NADPH] hemoprotein beta-component from Shewanella baltica (strain OS185).